A 122-amino-acid chain; its full sequence is Large ribosomal subunit protein uL14c (122 aa).

Belongs to the universal ribosomal protein uL14 family. As to quaternary structure, part of the 50S ribosomal subunit.

The protein localises to the plastid. The protein resides in the chloroplast. Functionally, binds to 23S rRNA. In Cryptomeria japonica (Japanese cedar), this protein is Large ribosomal subunit protein uL14c.